Here is a 557-residue protein sequence, read N- to C-terminus: Inositol-3-phosphate synthase 1 (557 aa).

NAD(+) contacts are provided by Gly67, Gly68, Asn69, Asn70, Asp141, Ser177, Val178, Gln188, Arg191, Thr228, Ala229, Asn230, Thr231, Gly278, Ser279, Asp303, Ser306, Asn337, Asn338, Asp339, and Lys352. Position 279 is a phosphoserine (Ser279). Ser357 is modified (phosphoserine). 4 residues coordinate NAD(+): Gly390, Asp391, Asp419, and Ser420. At Ser523 the chain carries Phosphoserine. Positions Cys527–Thr557 are disordered.

This sequence belongs to the myo-inositol 1-phosphate synthase family. Requires NAD(+) as cofactor. In terms of tissue distribution, expressed in testis (at protein level).

Its subcellular location is the cytoplasm. It carries out the reaction D-glucose 6-phosphate = 1D-myo-inositol 3-phosphate. The protein operates within polyol metabolism; myo-inositol biosynthesis; myo-inositol from D-glucose 6-phosphate: step 1/2. Its function is as follows. Key enzyme in myo-inositol biosynthesis pathway that catalyzes the conversion of glucose 6-phosphate to 1-myo-inositol 1-phosphate in a NAD-dependent manner. Rate-limiting enzyme in the synthesis of all inositol-containing compounds. This chain is Inositol-3-phosphate synthase 1 (ISYNA1), found in Bos taurus (Bovine).